The following is a 335-amino-acid chain: Glyceraldehyde-3-phosphate dehydrogenase (335 aa).

NAD(+) contacts are provided by residues 10–11 (RI), Asp33, Lys77, and Thr119. D-glyceraldehyde 3-phosphate contacts are provided by residues 150–152 (SCT), Thr181, 210–211 (TG), and Arg233. The active-site Nucleophile is the Cys151. Residue Asn315 participates in NAD(+) binding.

The protein belongs to the glyceraldehyde-3-phosphate dehydrogenase family. In terms of assembly, homotetramer.

The protein resides in the cytoplasm. The catalysed reaction is D-glyceraldehyde 3-phosphate + phosphate + NAD(+) = (2R)-3-phospho-glyceroyl phosphate + NADH + H(+). It participates in carbohydrate degradation; glycolysis; pyruvate from D-glyceraldehyde 3-phosphate: step 1/5. Functionally, catalyzes the oxidative phosphorylation of glyceraldehyde 3-phosphate (G3P) to 1,3-bisphosphoglycerate (BPG) using the cofactor NAD. The first reaction step involves the formation of a hemiacetal intermediate between G3P and a cysteine residue, and this hemiacetal intermediate is then oxidized to a thioester, with concomitant reduction of NAD to NADH. The reduced NADH is then exchanged with the second NAD, and the thioester is attacked by a nucleophilic inorganic phosphate to produce BPG. This is Glyceraldehyde-3-phosphate dehydrogenase (gap) from Chlamydia muridarum (strain MoPn / Nigg).